We begin with the raw amino-acid sequence, 331 residues long: Mycothiol acetyltransferase (331 aa).

E33 is a binding site for 1D-myo-inositol 2-(L-cysteinylamino)-2-deoxy-alpha-D-glucopyranoside. The span at 59-86 (HAAEATAGSAASADPADPADPAAPADPA) shows a compositional bias: low complexity. Residues 59–89 (HAAEATAGSAASADPADPADPAAPADPADPA) form a disordered region. 115–120 (RRGHGS) serves as a coordination point for acetyl-CoA. Positions 183–331 (LRLDTFEESR…DVQLRATERG (149 aa)) constitute an N-acetyltransferase domain. Residues E210, K249, and E261 each contribute to the 1D-myo-inositol 2-(L-cysteinylamino)-2-deoxy-alpha-D-glucopyranoside site. 265-267 (VAT) contributes to the acetyl-CoA binding site. Y299 contributes to the 1D-myo-inositol 2-(L-cysteinylamino)-2-deoxy-alpha-D-glucopyranoside binding site. 304–309 (NAPALR) provides a ligand contact to acetyl-CoA.

Belongs to the acetyltransferase family. MshD subfamily. Monomer.

The enzyme catalyses 1D-myo-inositol 2-(L-cysteinylamino)-2-deoxy-alpha-D-glucopyranoside + acetyl-CoA = mycothiol + CoA + H(+). Functionally, catalyzes the transfer of acetyl from acetyl-CoA to desacetylmycothiol (Cys-GlcN-Ins) to form mycothiol. The chain is Mycothiol acetyltransferase from Brachybacterium faecium (strain ATCC 43885 / DSM 4810 / JCM 11609 / LMG 19847 / NBRC 14762 / NCIMB 9860 / 6-10).